The following is a 190-amino-acid chain: GTP cyclohydrolase 1 (190 aa).

The Zn(2+) site is built by cysteine 75, histidine 78, and cysteine 146.

Belongs to the GTP cyclohydrolase I family. In terms of assembly, toroid-shaped homodecamer, composed of two pentamers of five dimers.

It catalyses the reaction GTP + H2O = 7,8-dihydroneopterin 3'-triphosphate + formate + H(+). It functions in the pathway cofactor biosynthesis; 7,8-dihydroneopterin triphosphate biosynthesis; 7,8-dihydroneopterin triphosphate from GTP: step 1/1. The sequence is that of GTP cyclohydrolase 1 from Campylobacter jejuni subsp. jejuni serotype O:23/36 (strain 81-176).